Reading from the N-terminus, the 205-residue chain is Protein phosphatase inhibitor 2 (205 aa).

The disordered stretch occupies residues 1 to 44 (MAASTASHRPIKGILKNKTSTTSSMVASAEQPRGNVDEELSKKS). Ala-2 carries the post-translational modification N-acetylalanine. 2 required for binding PPP1CC regions span residues 12-17 (KGILKN) and 43-55 (KSQKWDEMNILAT). Residues 17-26 (NKTSTTSSMV) show a composition bias toward polar residues. A compositionally biased stretch (basic and acidic residues) spans 35–44 (NVDEELSKKS). Ser-44 carries the phosphoserine; by ATM modification. Thr-73 is modified (phosphothreonine; by GSK3). Ser-87 carries the phosphoserine modification. Phosphothreonine occurs at positions 89 and 92. The tract at residues 111–142 (EPKYRIQEQESSGEEDSDLSPEEREKKRQFEM) is disordered. Phosphoserine is present on residues Ser-121, Ser-122, Ser-127, and Ser-130. The segment covering 121–130 (SSGEEDSDLS) has biased composition (acidic residues). Over residues 131-142 (PEEREKKRQFEM) the composition is skewed to basic and acidic residues. Residues 147–150 (HYNE) are required for binding PPP1CC catalytic center, displacing metal ions and inhibition of PPP1CC catalytic activity. The segment at 163–205 (KDLHDDDEDEEMLETADGESMNTEESNQGSTPSDQQQNKLRSS) is disordered. Acidic residues predominate over residues 167 to 179 (DDDEDEEMLETAD). Polar residues predominate over residues 182–205 (SMNTEESNQGSTPSDQQQNKLRSS).

Belongs to the protein phosphatase inhibitor 2 family. In terms of assembly, heterodimer with PP1. In terms of processing, phosphorylation on Thr-73 by GSK3 activates PP1 by dissociating the PP1-PPP1R2 complex. Phosphorylation on Ser-44 by ATM activates PP1 by dissociating the PP1-PPP1R2 complex.

Functionally, inhibitor of protein-phosphatase 1. This chain is Protein phosphatase inhibitor 2 (PPP1R2), found in Homo sapiens (Human).